The chain runs to 388 residues: Integrase (388 aa).

Residues 70-151 (YTVADAVNDW…CLNRAVKRAM (82 aa)) form the Core-binding (CB) domain. The Tyr recombinase domain maps to 173-379 (RPSKALTFAQ…VIQTGAVVMD (207 aa)). Residues Arg208, Lys249, Arg330, and His353 contribute to the active site. Tyr363 serves as the catalytic O-(3'-phospho-DNA)-tyrosine intermediate.

This sequence belongs to the 'phage' integrase family.

In terms of biological role, required for integration of pSAM2. In Streptomyces ambofaciens, this protein is Integrase (int).